The primary structure comprises 285 residues: Golgi phosphoprotein 3-like (285 aa).

A disordered region spans residues 1–42 (MTTLTHRARRTEISKNSEKKMESEEDSNWEKSPDNEDSGDSK). The span at 10 to 42 (RTEISKNSEKKMESEEDSNWEKSPDNEDSGDSK) shows a compositional bias: basic and acidic residues. A 1,2-diacyl-sn-glycero-3-phospho-(1D-myo-inositol 4-phosphate) contacts are provided by Trp-67 and Arg-76. Residue Ser-112 is modified to Phosphoserine. A 1,2-diacyl-sn-glycero-3-phospho-(1D-myo-inositol 4-phosphate) contacts are provided by Arg-157 and Arg-160. The tract at residues 176–187 (EKQNFLLFDMTT) is beta-hairpin required for oligomerization.

It belongs to the GOLPH3/VPS74 family. Homooligomer. Does not interact MYO18; differs from GOLPH3 by its inability to interact with MYO18. May interact with ARF1.

The protein resides in the golgi apparatus. It is found in the golgi stack membrane. Its subcellular location is the trans-Golgi network membrane. Functionally, phosphatidylinositol-4-phosphate-binding protein that may antagonize the action of GOLPH3 which is required for the process of vesicle budding at the Golgi and anterograde transport to the plasma membrane. This is Golgi phosphoprotein 3-like (GOLPH3L) from Homo sapiens (Human).